The primary structure comprises 488 residues: Germacrene A hydroxylase (488 aa).

Over Met-1–Thr-6 the chain is Cytoplasmic. A helical; Signal-anchor for type II membrane protein transmembrane segment spans residues Thr-7–Thr-23. Topologically, residues Arg-24 to Phe-488 are lumenal. Asn-169, Asn-260, Asn-379, and Asn-412 each carry an N-linked (GlcNAc...) asparagine glycan. Heme is bound at residue Cys-432.

It belongs to the cytochrome P450 family. It depends on heme as a cofactor. Expressed in leaf primordia.

Its subcellular location is the endoplasmic reticulum membrane. The catalysed reaction is (+)-(R)-germacrene A + 3 reduced [NADPH--hemoprotein reductase] + 3 O2 = germacra-1(10),4,11(13)-trien-12-oate + 3 oxidized [NADPH--hemoprotein reductase] + 4 H2O + 4 H(+). Its pathway is secondary metabolite biosynthesis; terpenoid biosynthesis. Functionally, involved in the biosynthesis of germacrene-derived sesquiterpene lactones. Catalyzes three consecutive oxidations of germacrene A to produce germacrene A acid. Could also catalyze the three-step oxidation of non-natural substrate amorphadiene to artemisinic acid. This Helianthus annuus (Common sunflower) protein is Germacrene A hydroxylase.